The following is a 193-amino-acid chain: MVLIGLMGGKGSGKTTAASYLIDRLGFIEKSFADPLKKACKELFLLSDEQIYGTQEQKETPDDRWFGCTPRKMLQYVGTDLLRDYLDNIMPGLHKNIFTHHFRLWYRDLMMKNPHACVVISDVRFQNEADFIKELGGYLIKIDRPGIASDDTHPSEVELRSIKSYDIVLVNNKTIEEFYSQIISCVDNASQMN.

Lys-10 is a dGMP binding site. Positions 13 and 16 each coordinate ATP. The dGMP site is built by Leu-36, Lys-37, Lys-58, Asp-122, Arg-124, Glu-128, and Ser-155.

The protein belongs to the dNMP kinase family.

The enzyme catalyses a 2'-deoxyribonucleoside 5'-phosphate + ATP = a 2'-deoxyribonucleoside 5'-diphosphate + ADP. The protein is Putative deoxynucleotide monophosphate kinase of Acanthamoeba polyphaga mimivirus (APMV).